The following is a 263-amino-acid chain: Isoprenyl transferase (263 aa).

Asp-38 is a catalytic residue. Asp-38 is a Mg(2+) binding site. Substrate is bound by residues 39–42, His-55, and 83–85; these read GNRR and STD. The active-site Proton acceptor is Asn-86. Substrate-binding positions include Phe-87, Arg-89, Arg-212, and 218–220; that span reads RLS. Residue Glu-231 coordinates Mg(2+).

This sequence belongs to the UPP synthase family. Homodimer. The cofactor is Mg(2+).

In terms of biological role, catalyzes the condensation of isopentenyl diphosphate (IPP) with allylic pyrophosphates generating different type of terpenoids. The sequence is that of Isoprenyl transferase from Thermus thermophilus (strain ATCC BAA-163 / DSM 7039 / HB27).